Reading from the N-terminus, the 249-residue chain is Probable transcriptional regulatory protein CYA_2259 (249 aa).

Belongs to the TACO1 family.

The protein resides in the cytoplasm. The chain is Probable transcriptional regulatory protein CYA_2259 from Synechococcus sp. (strain JA-3-3Ab) (Cyanobacteria bacterium Yellowstone A-Prime).